A 119-amino-acid polypeptide reads, in one-letter code: Insulin growth factor-like family member 2 (119 aa).

Residues 1–25 (MVPRIFAPAYVSVCLLLLCPREVIA) form the signal peptide.

Belongs to the IGFL family. Detected in cerebellum, heart, placenta, spleen, stomach, testis and thymus.

The protein localises to the secreted. Functionally, potential ligand of the IGFLR1 cell membrane receptor. The polypeptide is Insulin growth factor-like family member 2 (IGFL2) (Homo sapiens (Human)).